A 290-amino-acid polypeptide reads, in one-letter code: Membrane protein insertase YidC (290 aa).

Residues 1–19 (MKKKTLLPLFLGIMVFLAG) form the signal peptide. A lipid anchor (N-palmitoyl cysteine) is attached at Cys-20. Residue Cys-20 is the site of S-diacylglycerol cysteine attachment. Helical transmembrane passes span 56-76 (YGLA…PFML), 134-154 (MLGC…YFVL), 176-196 (PDIW…YVSS), 207-224 (GYMM…ISLS), and 229-251 (LGLY…NIYY). Positions 270–290 (HNGGSNKKGKNTQVVSKKKKK) are disordered.

The protein belongs to the OXA1/ALB3/YidC family. Type 2 subfamily.

Its subcellular location is the cell membrane. Required for the insertion and/or proper folding and/or complex formation of integral membrane proteins into the membrane. Involved in integration of membrane proteins that insert both dependently and independently of the Sec translocase complex, as well as at least some lipoproteins. In Staphylococcus aureus (strain MRSA252), this protein is Membrane protein insertase YidC.